The following is a 116-amino-acid chain: Non-specific lipid-transfer protein (116 aa).

A signal peptide spans 1-22; sequence MSLKLACVVVLCMVVGAPLAQG. Intrachain disulfides connect cysteine 36–cysteine 52, cysteine 53–cysteine 98, and cysteine 73–cysteine 112.

The protein belongs to the plant LTP family.

Its function is as follows. Plant non-specific lipid-transfer proteins transfer phospholipids as well as galactolipids across membranes. May play a role in wax or cutin deposition in the cell walls of expanding epidermal cells and certain secretory tissues. This Gossypium hirsutum (Upland cotton) protein is Non-specific lipid-transfer protein.